Reading from the N-terminus, the 494-residue chain is Metal cation symporter ZIP14 (494 aa).

The first 34 residues, 1–34 (MTLRRASGCRQLTLTIGLALTLGLLQWPIGDVRG), serve as a signal peptide directing secretion. Residues 35–152 (QDGASPAQVL…PTEAEVWGYG (118 aa)) lie on the Extracellular side of the membrane. Residues 153–173 (LLCVTVISLCSLVGASVVPFM) form a helical membrane-spanning segment. The Cytoplasmic segment spans residues 174-181 (RKTFYKRL). A helical transmembrane segment spans residues 182–202 (LLYFIALAIGTLYSNALFQLI). At 203-219 (PEAFGFDPMEDYYVPKS) the chain is on the extracellular side. The chain crosses the membrane as a helical span at residues 220-240 (AVVFGGFYLFFFTEKILKMIL). Residues 241 to 397 (KPKDTGGHGH…LLNAGMSIQQ (157 aa)) lie on the Cytoplasmic side of the membrane. The HHHGHXHX-motif signature appears at 248 to 255 (HGHGHSHF). The short motif at 376–381 (EEFPHE) is the XEXPHE-motif element. Residues 398 to 418 (ALFFNFLSACCCYLGMGFGIL) traverse the membrane as a helical segment. The Extracellular segment spans residues 419 to 426 (AGNNFSPN). Residues 427–447 (WIFALAGGMFLYIALADMFPE) traverse the membrane as a helical segment. Over 448-462 (MNEVSREEEEAGGSG) the chain is Cytoplasmic. A helical membrane pass occupies residues 463-483 (FLLTFALQNAGLLTGFAIMLV). Topologically, residues 484 to 494 (LTIYSGQIQLG) are extracellular.

It belongs to the ZIP transporter (TC 2.A.5) family. Homotrimer.

The protein resides in the cell membrane. It is found in the apical cell membrane. The protein localises to the basolateral cell membrane. Its subcellular location is the early endosome membrane. It localises to the late endosome membrane. The protein resides in the lysosome membrane. It catalyses the reaction Zn(2+)(out) + 2 hydrogencarbonate(out) = Zn(2+)(in) + 2 hydrogencarbonate(in). It carries out the reaction Mn(2+)(out) + 2 hydrogencarbonate(out) = Mn(2+)(in) + 2 hydrogencarbonate(in). The enzyme catalyses Fe(2+)(out) + 2 hydrogencarbonate(out) = Fe(2+)(in) + 2 hydrogencarbonate(in). The catalysed reaction is Cd(2+)(out) + 2 hydrogencarbonate(out) = Cd(2+)(in) + 2 hydrogencarbonate(in). Broad-scope metal ion transporter with a preference for zinc uptake. Also mediates cellular uptake of nontransferrin-bound iron. Its function is as follows. Electroneutral transporter of the plasma membrane mediating the cellular uptake of the divalent metal cations zinc, manganese and iron that are important for tissue homeostasis, metabolism, development and immunity. Functions as an energy-dependent symporter, transporting through the membranes an electroneutral complex composed of a divalent metal cation and two bicarbonate anions. Beside these endogenous cellular substrates, can also import cadmium a non-essential metal which is cytotoxic and carcinogenic. The polypeptide is Metal cation symporter ZIP14 (Danio rerio (Zebrafish)).